The following is a 61-amino-acid chain: uncharacterized protein (61 aa).

2 helical membrane-spanning segments follow: residues 4-24 and 34-54; these read IIAFIWTFLLSHMACYLVASM and SSVIAVVLYVLIMVLAEIMPM.

Its subcellular location is the cell membrane. This is an uncharacterized protein from Bacillus subtilis (strain 168).